A 718-amino-acid chain; its full sequence is K(+)-insensitive pyrophosphate-energized proton pump (718 aa).

The next 6 helical transmembrane spans lie at alanine 6 to isoleucine 26, leucine 54 to leucine 76, alanine 81 to valine 103, alanine 112 to glycine 132, leucine 133 to tryptophan 153, and valine 168 to phenylalanine 188. Lysine 190 is a substrate binding site. Residues aspartate 193, aspartate 197, asparagine 220, and aspartate 223 each coordinate Mg(2+). 6 helical membrane passes run alanine 240–leucine 260, leucine 265–valine 285, glycine 300–valine 320, glycine 335–isoleucine 355, glycine 385–isoleucine 405, and leucine 413–leucine 433. Aspartate 441 serves as a coordination point for Mg(2+). The next 4 helical transmembrane spans lie at alanine 472–alanine 492, tyrosine 524–methionine 544, isoleucine 593–isoleucine 613, and alanine 620–isoleucine 640. Aspartate 650, aspartate 682, and aspartate 686 together coordinate Ca(2+). Residue lysine 689 participates in substrate binding. Residues alanine 695 to alanine 715 form a helical membrane-spanning segment.

The protein belongs to the H(+)-translocating pyrophosphatase (TC 3.A.10) family. K(+)-insensitive subfamily. Homodimer. Mg(2+) serves as cofactor.

Its subcellular location is the cell inner membrane. It carries out the reaction diphosphate + H2O + H(+)(in) = 2 phosphate + 2 H(+)(out). In terms of biological role, proton pump that utilizes the energy of pyrophosphate hydrolysis as the driving force for proton movement across the membrane. Generates a proton motive force. The sequence is that of K(+)-insensitive pyrophosphate-energized proton pump from Brucella anthropi (strain ATCC 49188 / DSM 6882 / CCUG 24695 / JCM 21032 / LMG 3331 / NBRC 15819 / NCTC 12168 / Alc 37) (Ochrobactrum anthropi).